Consider the following 284-residue polypeptide: Four and a half LIM domains protein 5 (284 aa).

Residues 8-32 (CQYCMASLLGKKYVLKDDNPYCVSC) form a C4-type zinc finger. LIM zinc-binding domains are found at residues 39–100 (NYCE…ECSS), 101–160 (KCFH…KEFA), 161–220 (HYCS…LYAK), and 223–283 (AACT…VDTD).

In terms of assembly, interacts with CREM (via the third LIM domain). Interacts (via second LIM domain) with SPAG8.

The protein resides in the nucleus. Functionally, may be involved in the regulation of spermatogenesis. Stimulates CREM transcriptional activity in a phosphorylation-independent manner. The chain is Four and a half LIM domains protein 5 (FHL5) from Bos taurus (Bovine).